A 385-amino-acid polypeptide reads, in one-letter code: Methylthioribose-1-phosphate isomerase (385 aa).

Asp255 functions as the Proton donor in the catalytic mechanism.

It belongs to the eIF-2B alpha/beta/delta subunits family. MtnA subfamily.

It is found in the cytoplasm. The protein localises to the nucleus. It carries out the reaction 5-(methylsulfanyl)-alpha-D-ribose 1-phosphate = 5-(methylsulfanyl)-D-ribulose 1-phosphate. It participates in amino-acid biosynthesis; L-methionine biosynthesis via salvage pathway; L-methionine from S-methyl-5-thio-alpha-D-ribose 1-phosphate: step 1/6. Functionally, catalyzes the interconversion of methylthioribose-1-phosphate (MTR-1-P) into methylthioribulose-1-phosphate (MTRu-1-P). The polypeptide is Methylthioribose-1-phosphate isomerase (mri1) (Aspergillus clavatus (strain ATCC 1007 / CBS 513.65 / DSM 816 / NCTC 3887 / NRRL 1 / QM 1276 / 107)).